A 618-amino-acid chain; its full sequence is Pyocin-S1 (618 aa).

Belongs to the colicin/pyosin nuclease family. As to quaternary structure, purified pyocin S1 makes up a complex of the two (large and small) proteins. The large protein, but not the pyocin complex, shows in vitro DNase activity.

In terms of biological role, causes breakdown of chromosomal DNA as well as complete inhibition of lipid synthesis in sensitive cells. In Pseudomonas aeruginosa, this protein is Pyocin-S1 (pys1).